We begin with the raw amino-acid sequence, 285 residues long: Small ribosomal subunit biogenesis GTPase RsgA (285 aa).

The CP-type G domain maps to 61 to 215; sequence KNQLIRPKVA…IIDSPGFSSF (155 aa). Residues 110 to 113 and 159 to 167 contribute to the GTP site; these read TKID and GQTGVGKTS. Cys239, Cys244, His246, and Cys254 together coordinate Zn(2+).

This sequence belongs to the TRAFAC class YlqF/YawG GTPase family. RsgA subfamily. Monomer. Associates with 30S ribosomal subunit, binds 16S rRNA. The cofactor is Zn(2+).

Its subcellular location is the cytoplasm. In terms of biological role, one of several proteins that assist in the late maturation steps of the functional core of the 30S ribosomal subunit. Helps release RbfA from mature subunits. May play a role in the assembly of ribosomal proteins into the subunit. Circularly permuted GTPase that catalyzes slow GTP hydrolysis, GTPase activity is stimulated by the 30S ribosomal subunit. The polypeptide is Small ribosomal subunit biogenesis GTPase RsgA (Mesomycoplasma hyopneumoniae (strain 7448) (Mycoplasma hyopneumoniae)).